A 101-amino-acid polypeptide reads, in one-letter code: Urease subunit beta (101 aa).

The protein belongs to the urease beta subunit family. In terms of assembly, heterotrimer of UreA (gamma), UreB (beta) and UreC (alpha) subunits. Three heterotrimers associate to form the active enzyme.

It is found in the cytoplasm. The enzyme catalyses urea + 2 H2O + H(+) = hydrogencarbonate + 2 NH4(+). It participates in nitrogen metabolism; urea degradation; CO(2) and NH(3) from urea (urease route): step 1/1. This is Urease subunit beta from Ruegeria sp. (strain TM1040) (Silicibacter sp.).